The primary structure comprises 1021 residues: Sodium/potassium-transporting ATPase subunit alpha-1 (1021 aa).

A propeptide spanning residues 1–5 (MGKGV) is cleaved from the precursor. Over residues 1 to 11 (MGKGVGRDKYE) the composition is skewed to basic and acidic residues. The interval 1–36 (MGKGVGRDKYEPAAVSEHGDKKKAKKERDMDELKKE) is disordered. Residues 6–85 (GRDKYEPAAV…NALTPPPTTP (80 aa)) lie on the Cytoplasmic side of the membrane. Lys-9 is subject to N6-acetyllysine. Position 10 is a phosphotyrosine (Tyr-10). Position 16 is a phosphoserine; by PKC (Ser-16). At Lys-21 the chain carries N6-acetyllysine. Positions 26 to 36 (KERDMDELKKE) are enriched in basic and acidic residues. A phosphoserine mark is found at Ser-38 and Ser-45. The phosphoinositide-3 kinase binding stretch occupies residues 80–82 (PPP). The helical transmembrane segment at 86-106 (EWVKFCRQLFGGFSMLLWIGA) threads the bilayer. Topologically, residues 107–129 (VLCFLAYGIQAATEEEPQNDNLY) are extracellular. The chain crosses the membrane as a helical span at residues 130-150 (LGVVLSAVVIITGCFSYYQEA). The Cytoplasmic segment spans residues 151–286 (KSSKIMESFK…GGQTPIAAEI (136 aa)). Residue Ser-226 is modified to Phosphoserine. Tyr-258 is modified (phosphotyrosine). A helical membrane pass occupies residues 287-306 (EHFIHIITGVAVFLGVSFFI). The Extracellular segment spans residues 307 to 318 (LSLILEYTWLEA). Residues 319-336 (VIFLIGIIVANVPEGLLA) form a helical membrane-spanning segment. At 337–770 (TVTVCLTLTA…EEGRLIFDNL (434 aa)) the chain is on the cytoplasmic side. Asp-374 serves as the catalytic 4-aspartylphosphate intermediate. 2 positions are modified to phosphoserine: Ser-450 and Ser-482. An ATP-binding site is contributed by Lys-485. Residue Tyr-540 is modified to Phosphotyrosine. The mediates interaction with SCN7A stretch occupies residues 594–715 (RAAVPDAVGK…QGAIVAVTGD (122 aa)). Phosphoserine is present on Ser-666. 2 residues coordinate Mg(2+): Asp-715 and Asp-719. The chain crosses the membrane as a helical span at residues 771 to 790 (KKSIAYTLTSNIPEITPFLI). The Extracellular segment spans residues 791–800 (FIIANIPLPL). A helical transmembrane segment spans residues 801–821 (GTVTILCIDLGTDMVPAISLA). Over 822–841 (YEQAESDIMKRQPRNPQTDK) the chain is Cytoplasmic. The chain crosses the membrane as a helical span at residues 842 to 864 (LVNERLISMAYGQIGMIQALGGF). The Extracellular segment spans residues 865–916 (FTYFVIMAENGFLPNHLLGIRVTWDDRWINDVEDSYGQQWTYEQRKIVEFTC). The chain crosses the membrane as a helical span at residues 917–936 (HTAFFVSIVVVQWADLVICK). Residues 937-949 (TRRNSVFQQGMKN) are Cytoplasmic-facing. At Ser-941 the chain carries Phosphoserine; by PKA. Residues 950 to 968 (KILIFGLFEETALAAFLSY) traverse the membrane as a helical segment. Over 969-983 (CPGMGVALRMYPLKP) the chain is Extracellular. The chain crosses the membrane as a helical span at residues 984–1004 (TWWFCAFPYSLLIFVYDEVRK). Residues 1005–1021 (LIIRRRPGGWVEKETYY) are Cytoplasmic-facing.

It belongs to the cation transport ATPase (P-type) (TC 3.A.3) family. Type IIC subfamily. The sodium/potassium-transporting ATPase is composed of a catalytic alpha subunit, an auxiliary non-catalytic beta subunit and an additional regulatory subunit. Interacts with regulatory subunit FXYD1. Interacts with regulatory subunit FXYD3. Interacts with SIK1. Interacts with SLC35G1 and STIM1. Interacts with CLN3; this interaction regulates the sodium/potassium-transporting ATPase complex localization at the plasma membrane. Interacts with SCN7A; activates ATP1A1 P-type sodium:potassium-exchanging transporter activity which indirectly signals to nearby neurons to regulate sodium homeostasis. In terms of processing, phosphorylation on Tyr-10 modulates pumping activity. Phosphorylation of Ser-941 by PKA modulates the response of ATP1A1 to PKC. Dephosphorylation by protein phosphatase 2A (PP2A) following increases in intracellular sodium, leading to increase catalytic activity.

Its subcellular location is the cell membrane. The protein localises to the basolateral cell membrane. It is found in the sarcolemma. It localises to the cell projection. The protein resides in the axon. Its subcellular location is the melanosome. It catalyses the reaction K(+)(out) + Na(+)(in) + ATP + H2O = K(+)(in) + Na(+)(out) + ADP + phosphate + H(+). Its activity is regulated as follows. Specifically inhibited by cardiac glycosides such as digoxin or ouabain. In terms of biological role, this is the catalytic component of the active enzyme, which catalyzes the hydrolysis of ATP coupled with the exchange of sodium and potassium ions across the plasma membrane. This action creates the electrochemical gradient of sodium and potassium ions, providing the energy for active transport of various nutrients. Could also be part of an osmosensory signaling pathway that senses body-fluid sodium levels and controls salt intake behavior as well as voluntary water intake to regulate sodium homeostasis. This chain is Sodium/potassium-transporting ATPase subunit alpha-1 (ATP1A1), found in Ovis aries (Sheep).